Reading from the N-terminus, the 482-residue chain is tRNA sulfurtransferase (482 aa).

Residues 61 to 165 enclose the THUMP domain; sequence AAIVAELTRI…DERLILVTAR (105 aa). ATP contacts are provided by residues 183–184, Lys-265, Gly-287, and Gln-296; that span reads LI. Cysteines 344 and 456 form a disulfide. Positions 404-482 constitute a Rhodanese domain; the sequence is FSHNDVILDI…GFKNVKVYRP (79 aa). The active-site Cysteine persulfide intermediate is Cys-456.

The protein belongs to the ThiI family.

The protein resides in the cytoplasm. It catalyses the reaction [ThiI sulfur-carrier protein]-S-sulfanyl-L-cysteine + a uridine in tRNA + 2 reduced [2Fe-2S]-[ferredoxin] + ATP + H(+) = [ThiI sulfur-carrier protein]-L-cysteine + a 4-thiouridine in tRNA + 2 oxidized [2Fe-2S]-[ferredoxin] + AMP + diphosphate. The enzyme catalyses [ThiS sulfur-carrier protein]-C-terminal Gly-Gly-AMP + S-sulfanyl-L-cysteinyl-[cysteine desulfurase] + AH2 = [ThiS sulfur-carrier protein]-C-terminal-Gly-aminoethanethioate + L-cysteinyl-[cysteine desulfurase] + A + AMP + 2 H(+). It participates in cofactor biosynthesis; thiamine diphosphate biosynthesis. Catalyzes the ATP-dependent transfer of a sulfur to tRNA to produce 4-thiouridine in position 8 of tRNAs, which functions as a near-UV photosensor. Also catalyzes the transfer of sulfur to the sulfur carrier protein ThiS, forming ThiS-thiocarboxylate. This is a step in the synthesis of thiazole, in the thiamine biosynthesis pathway. The sulfur is donated as persulfide by IscS. This chain is tRNA sulfurtransferase, found in Erwinia tasmaniensis (strain DSM 17950 / CFBP 7177 / CIP 109463 / NCPPB 4357 / Et1/99).